A 271-amino-acid chain; its full sequence is Virulence regulon transcriptional activator VirF (271 aa).

The HTH araC/xylS-type domain occupies 167–265 (ERLQKFMEEN…GCTPSQARLT (99 aa)). 2 consecutive DNA-binding regions (H-T-H motif) follow at residues 184–205 (SKFA…GTVY) and 232–255 (IVDI…RRRF).

Transcriptional activator of the Yersinia virulence regulon. In Yersinia enterocolitica, this protein is Virulence regulon transcriptional activator VirF (virF).